The following is a 240-amino-acid chain: uncharacterized protein (240 aa).

Residues 216-240 form a disordered region; it reads MKQSKNKPRIRQAVGATRQCRKPQA.

This is an uncharacterized protein from Escherichia coli (strain K12).